The following is a 69-amino-acid chain: Pancreatic secretory trypsin inhibitor (69 aa).

A Kazal-like domain is found at 8–65 (TGTEAACSNYDLKKGCAKIFDPVCGTDNILYSNECLLCFQNLQRKTNVRIKRRGTCQE). Disulfide bonds link Cys-14–Cys-45, Cys-23–Cys-42, and Cys-31–Cys-63.

Its subcellular location is the secreted. This is a trypsin inhibitor, its physiological function is to prevent the trypsin-catalyzed premature activation of zymogens within the pancreas. The sequence is that of Pancreatic secretory trypsin inhibitor (SPINK1) from Struthio camelus (Common ostrich).